A 592-amino-acid chain; its full sequence is Arginine--tRNA ligase (592 aa).

Positions 112-122 match the 'HIGH' region motif; the sequence is VNPNKELHVGH.

This sequence belongs to the class-I aminoacyl-tRNA synthetase family. Monomer.

Its subcellular location is the cytoplasm. The enzyme catalyses tRNA(Arg) + L-arginine + ATP = L-arginyl-tRNA(Arg) + AMP + diphosphate. This Thermus thermophilus (strain ATCC BAA-163 / DSM 7039 / HB27) protein is Arginine--tRNA ligase.